The primary structure comprises 525 residues: Glucans biosynthesis protein G (525 aa).

A signal peptide spans 1-35; sequence MIFRSVSNTDFRARVRTLLLAGSTALAFVAAPVWA.

This sequence belongs to the OpgD/OpgG family.

The protein resides in the periplasm. Its pathway is glycan metabolism; osmoregulated periplasmic glucan (OPG) biosynthesis. Involved in the biosynthesis of osmoregulated periplasmic glucans (OPGs). In Pseudomonas paraeruginosa (strain DSM 24068 / PA7) (Pseudomonas aeruginosa (strain PA7)), this protein is Glucans biosynthesis protein G.